The sequence spans 484 residues: Keratin, type I cytoskeletal 14 (484 aa).

Positions M1–I20 are disordered. The head stretch occupies residues M1–S120. Residues E121–W156 form a coil 1A region. Residues E121–L432 enclose the IF rod domain. Positions Y157–T174 are linker 1. The segment at I175 to M266 is coil 1B. The linker 12 stretch occupies residues R267–I289. Residues L290–E428 are coil 2. The tract at residues D429 to N484 is tail. The interval H431–N484 is interaction with Type I keratins and keratin filaments. Over residues S435–S450 the composition is skewed to low complexity. Residues S435–N457 form a disordered region. Position 447 is a phosphoserine (S447).

It belongs to the intermediate filament family. In terms of assembly, heterotetramer of two type I and two type II keratins. Forms a disulfide-linked heterodimer (via 2B domains) with KRT5 (via 2B domains). Forms a heterodimer with KRT1; the interaction is more abundant in the absence of KRT5. Interacts with PLEC isoform 1C, when in a heterodimer with KRT5. Interacts with TRADD and with keratin filaments. Associates with other type I keratins. Interacts with EPPK1. Interacts with KLHL24. Interacts with PKP1 (via N-terminus) and PKP2. A disulfide bond is formed between rather than within filaments and promotes the formation of a keratin filament cage around the nucleus. Post-translationally, ubiquitinated by the BCR(KLHL24) E3 ubiquitin ligase complex. In terms of tissue distribution, expressed in the corneal epithelium (at protein level). Expressed in the basal layer of the epidermis and the outer root sheath of hair follicles (at protein level). Expressed in the epithelial basal layer in the tail epidermis. Expressed in the parabasal cell row, basal cell layer, and suprabasal epithelial layer of the tongue.

The protein localises to the cytoplasm. Its subcellular location is the nucleus. In terms of biological role, the nonhelical tail domain is involved in promoting KRT5-KRT14 filaments to self-organize into large bundles and enhances the mechanical properties involved in resilience of keratin intermediate filaments in vitro. The sequence is that of Keratin, type I cytoskeletal 14 (Krt14) from Mus musculus (Mouse).